A 362-amino-acid chain; its full sequence is MGEEGIKINDTHKRRIDEVEPSEKEDNVERQTKKYNFEIDEPEEQEKKDEKEDDKEESPSKSLEEISQSVSPVEEEPRDVRFKELSTPFSYPINDPPEGRPVRVYADGVFDLFHIGHMRQLEQAKKVFPNVHLIVGLPNDQLTHRLKGLTVMNDKERAEALRHCKWVDEVLENAPWVITPEFLEEHKIDFVAHDDIPYASDDSGDIYLPVKKVGKFIPTKRTEGVSTSDLITRIIRDYDQYVMRNLARGVNRKELNVSLFKKNELDLRHHIKVLRDTLRNHWVSTTRDLKADIKSFLSMATTDYQLQKNPLHGSSEPSSPGPTGFLGGINRWMQRRSSSHYDLPRVGNEIAASSSSATEENH.

Over residues 1–37 the composition is skewed to basic and acidic residues; it reads MGEEGIKINDTHKRRIDEVEPSEKEDNVERQTKKYNF. The segment at 1–79 is disordered; that stretch reads MGEEGIKIND…VSPVEEEPRD (79 aa). CTP-binding positions include 109–117 and Lys-147; that span reads VFDLFHIGH. Lys-147 and Trp-176 together coordinate substrate. Residues 193-194, Tyr-198, and 221-225 contribute to the CTP site; these read HD and RTEGV. Residues 308–362 form a disordered region; it reads KNPLHGSSEPSSPGPTGFLGGINRWMQRRSSSHYDLPRVGNEIAASSSSATEENH. Composition is skewed to low complexity over residues 313-323 and 351-362; these read GSSEPSSPGPT and AASSSSATEENH. Residues Ser-315 and Ser-319 each carry the phosphoserine modification. Thr-323 bears the Phosphothreonine mark. Phosphoserine is present on Ser-355.

It belongs to the cytidylyltransferase family.

The protein resides in the nucleus. The enzyme catalyses phosphocholine + CTP + H(+) = CDP-choline + diphosphate. This is Probable choline-phosphate cytidylyltransferase from Schizosaccharomyces pombe (strain 972 / ATCC 24843) (Fission yeast).